The primary structure comprises 1439 residues: Receptor-type tyrosine-protein phosphatase kappa (1439 aa).

The first 26 residues, 1 to 26, serve as a signal peptide directing secretion; sequence MDTTAAAALPAFVALLLLSPWPLLGS. Topologically, residues 27 to 752 are extracellular; it reads AQGQFSAGGC…PAKQTDRVVK (726 aa). Residues 31–194 form the MAM domain; that stretch reads FSAGGCTFDD…IQVLSYPCDK (164 aa). Asparagine 101, asparagine 140, and asparagine 211 each carry an N-linked (GlcNAc...) asparagine glycan. The Ig-like C2-type domain occupies 196–281; sequence PHFLRLGDVE…TQSERGSGVS (86 aa). Cysteines 216 and 270 form a disulfide. Fibronectin type-III domains follow at residues 294 to 389, 392 to 488, 491 to 595, and 597 to 680; these read PIAP…CAEP, TPKT…TDED, GPVP…SAPT, and PDYE…GNLP. 9 N-linked (GlcNAc...) asparagine glycosylation sites follow: asparagine 416, asparagine 424, asparagine 436, asparagine 462, asparagine 552, asparagine 586, asparagine 590, asparagine 607, and asparagine 690. A helical transmembrane segment spans residues 753–774; sequence IAGISAGILVFILLLLVVILIV. Over 775 to 1439 the chain is Cytoplasmic; the sequence is KKSKLAKKRK…DVALEYLESS (665 aa). A Phosphoserine modification is found at serine 856. Tyrosine-protein phosphatase domains lie at 887–1141 and 1173–1435; these read FKEE…ILEA and LKDE…ALEY. Residues aspartate 1050, 1082–1088, and glutamine 1126 contribute to the substrate site; that span reads CSAGAGR. Cysteine 1082 acts as the Phosphocysteine intermediate in catalysis. Residue cysteine 1376 is the Phosphocysteine intermediate of the active site.

This sequence belongs to the protein-tyrosine phosphatase family. Receptor class 2B subfamily. In terms of processing, this protein undergoes proteolytic processing. In terms of tissue distribution, high levels in lung, brain and colon; less in liver, pancreas, stomach, kidney, placenta and mammary carcinoma.

It localises to the cell junction. The protein localises to the adherens junction. The protein resides in the cell membrane. It carries out the reaction O-phospho-L-tyrosyl-[protein] + H2O = L-tyrosyl-[protein] + phosphate. Its function is as follows. Regulation of processes involving cell contact and adhesion such as growth control, tumor invasion, and metastasis. Negative regulator of EGFR signaling pathway. Forms complexes with beta-catenin and gamma-catenin/plakoglobin. Beta-catenin may be a substrate for the catalytic activity of PTPRK/PTP-kappa. This is Receptor-type tyrosine-protein phosphatase kappa (PTPRK) from Homo sapiens (Human).